We begin with the raw amino-acid sequence, 227 residues long: Cytochrome c oxidase subunit 2 (227 aa).

At 1–22 (MAYPFQLGLQDATSPIMEELMN) the chain is on the mitochondrial intermembrane side. A helical transmembrane segment spans residues 23–44 (FHDHTLMIVFLISSLVLYIISL). Over 45-60 (MLTTKLTHTSTMDAQE) the chain is Mitochondrial matrix. Residues 61 to 81 (VETIWTILPAVILIMIALPSL) form a helical membrane-spanning segment. The Mitochondrial intermembrane segment spans residues 82–227 (RILYMMDEIN…YFENWSASMI (146 aa)). The Cu cation site is built by His161, Cys196, Glu198, Cys200, His204, and Met207. Glu198 serves as a coordination point for Mg(2+). Phosphotyrosine is present on Tyr218.

It belongs to the cytochrome c oxidase subunit 2 family. As to quaternary structure, component of the cytochrome c oxidase (complex IV, CIV), a multisubunit enzyme composed of 14 subunits. The complex is composed of a catalytic core of 3 subunits MT-CO1, MT-CO2 and MT-CO3, encoded in the mitochondrial DNA, and 11 supernumerary subunits COX4I, COX5A, COX5B, COX6A, COX6B, COX6C, COX7A, COX7B, COX7C, COX8 and NDUFA4, which are encoded in the nuclear genome. The complex exists as a monomer or a dimer and forms supercomplexes (SCs) in the inner mitochondrial membrane with NADH-ubiquinone oxidoreductase (complex I, CI) and ubiquinol-cytochrome c oxidoreductase (cytochrome b-c1 complex, complex III, CIII), resulting in different assemblies (supercomplex SCI(1)III(2)IV(1) and megacomplex MCI(2)III(2)IV(2)). Found in a complex with TMEM177, COA6, COX18, COX20, SCO1 and SCO2. Interacts with TMEM177 in a COX20-dependent manner. Interacts with COX20. Interacts with COX16. Cu cation serves as cofactor.

The protein resides in the mitochondrion inner membrane. The catalysed reaction is 4 Fe(II)-[cytochrome c] + O2 + 8 H(+)(in) = 4 Fe(III)-[cytochrome c] + 2 H2O + 4 H(+)(out). Its function is as follows. Component of the cytochrome c oxidase, the last enzyme in the mitochondrial electron transport chain which drives oxidative phosphorylation. The respiratory chain contains 3 multisubunit complexes succinate dehydrogenase (complex II, CII), ubiquinol-cytochrome c oxidoreductase (cytochrome b-c1 complex, complex III, CIII) and cytochrome c oxidase (complex IV, CIV), that cooperate to transfer electrons derived from NADH and succinate to molecular oxygen, creating an electrochemical gradient over the inner membrane that drives transmembrane transport and the ATP synthase. Cytochrome c oxidase is the component of the respiratory chain that catalyzes the reduction of oxygen to water. Electrons originating from reduced cytochrome c in the intermembrane space (IMS) are transferred via the dinuclear copper A center (CU(A)) of subunit 2 and heme A of subunit 1 to the active site in subunit 1, a binuclear center (BNC) formed by heme A3 and copper B (CU(B)). The BNC reduces molecular oxygen to 2 water molecules using 4 electrons from cytochrome c in the IMS and 4 protons from the mitochondrial matrix. The protein is Cytochrome c oxidase subunit 2 (Mtco2) of Mus musculus (Mouse).